We begin with the raw amino-acid sequence, 421 residues long: Testin (421 aa).

In terms of domain architecture, PET spans 92–199; the sequence is MILTNPVAAK…GDVKLPCEMD (108 aa). The segment at 133–164 is disordered; sequence EKQPVAGSEGAQYRKKQLAKQLPAHDQDPSKC. Basic and acidic residues predominate over residues 155 to 164; the sequence is PAHDQDPSKC. LIM zinc-binding domains follow at residues 234–297, 299–359, and 362–421; these read YSCY…CDSE, PRCA…NHAV, and QGCH…KMMS.

It belongs to the prickle / espinas / testin family. Interacts via LIM domain 1 with ZYX. Interacts (via LIM domain 3) with ENAH and VASP. Interacts with ALKBH4, talin, actin, alpha-actinin, GRIP1 and PXN. Interacts (via LIM domain 2) with ACTL7A (via N-terminus). Heterodimer with ACTL7A; the heterodimer interacts with ENAH to form a heterotrimer.

The protein resides in the cytoplasm. The protein localises to the cell junction. It is found in the focal adhesion. In terms of biological role, scaffold protein that may play a role in cell adhesion, cell spreading and in the reorganization of the actin cytoskeleton. Plays a role in the regulation of cell proliferation. May act as a tumor suppressor. The sequence is that of Testin (TES) from Microcebus murinus (Gray mouse lemur).